The following is a 346-amino-acid chain: Queuosine 5'-phosphate N-glycosylase/hydrolase (346 aa).

Positions 49, 243, 245, 310, and 315 each coordinate queuine. The active-site Nucleophile or transition state stabilizer is Asp245.

It belongs to the QNG1 protein family.

The enzyme catalyses queuosine 5'-phosphate + H2O = queuine + D-ribose 5-phosphate. Its function is as follows. Catalyzes the hydrolysis of queuosine 5'-phosphate, releasing the nucleobase queuine (q). Is required for salvage of queuine from exogenous queuosine (Q) that is imported and then converted to queuosine 5'-phosphate intracellularly. The sequence is that of Queuosine 5'-phosphate N-glycosylase/hydrolase from Schizosaccharomyces pombe (strain 972 / ATCC 24843) (Fission yeast).